The primary structure comprises 34 residues: Beta-theraphotoxin-Pmu1a (34 aa).

Intrachain disulfides connect Cys-3–Cys-18, Cys-10–Cys-23, and Cys-17–Cys-30. Leu-34 is subject to Leucine amide.

This sequence belongs to the neurotoxin 10 (Hwtx-1) family. 34 (Jztx-26) subfamily. In terms of tissue distribution, expressed by the venom gland.

It is found in the secreted. Its function is as follows. Spider venom neurotoxin that blocks voltage-gated sodium channels Nav1.3/SCN3A and Nav1.8/SCN10A in human (IC(50)=2 uM and IC(50)=4 uM, respectively) and rat (IC(50)=2 uM and IC(50)=2.5 uM, respectively). The protein is Beta-theraphotoxin-Pmu1a of Pterinochilus murinus (Mombasa golden starburst baboon spider).